A 217-amino-acid chain; its full sequence is Thiamine-phosphate synthase (217 aa).

4-amino-2-methyl-5-(diphosphooxymethyl)pyrimidine contacts are provided by residues 39 to 43 (QLRRK) and asparagine 71. Mg(2+) is bound by residues aspartate 72 and aspartate 91. Serine 110 is a binding site for 4-amino-2-methyl-5-(diphosphooxymethyl)pyrimidine. A 2-[(2R,5Z)-2-carboxy-4-methylthiazol-5(2H)-ylidene]ethyl phosphate-binding site is contributed by 137–139 (SPT). Lysine 140 serves as a coordination point for 4-amino-2-methyl-5-(diphosphooxymethyl)pyrimidine. 2-[(2R,5Z)-2-carboxy-4-methylthiazol-5(2H)-ylidene]ethyl phosphate-binding positions include glycine 173 and 193-194 (IS).

Belongs to the thiamine-phosphate synthase family. Mg(2+) serves as cofactor.

It catalyses the reaction 2-[(2R,5Z)-2-carboxy-4-methylthiazol-5(2H)-ylidene]ethyl phosphate + 4-amino-2-methyl-5-(diphosphooxymethyl)pyrimidine + 2 H(+) = thiamine phosphate + CO2 + diphosphate. The catalysed reaction is 2-(2-carboxy-4-methylthiazol-5-yl)ethyl phosphate + 4-amino-2-methyl-5-(diphosphooxymethyl)pyrimidine + 2 H(+) = thiamine phosphate + CO2 + diphosphate. It carries out the reaction 4-methyl-5-(2-phosphooxyethyl)-thiazole + 4-amino-2-methyl-5-(diphosphooxymethyl)pyrimidine + H(+) = thiamine phosphate + diphosphate. It functions in the pathway cofactor biosynthesis; thiamine diphosphate biosynthesis; thiamine phosphate from 4-amino-2-methyl-5-diphosphomethylpyrimidine and 4-methyl-5-(2-phosphoethyl)-thiazole: step 1/1. In terms of biological role, condenses 4-methyl-5-(beta-hydroxyethyl)thiazole monophosphate (THZ-P) and 2-methyl-4-amino-5-hydroxymethyl pyrimidine pyrophosphate (HMP-PP) to form thiamine monophosphate (TMP). This Bordetella parapertussis (strain 12822 / ATCC BAA-587 / NCTC 13253) protein is Thiamine-phosphate synthase.